Consider the following 557-residue polypeptide: Alpha-barbatene synthase (557 aa).

(2E,6E)-farnesyl diphosphate is bound by residues R273, D310, D314, R451, and D454. Residues D310 and D314 each coordinate Mg(2+). A DDXXD motif motif is present at residues 310 to 314 (DDACD). Positions 454, 455, and 462 each coordinate Mg(2+).

Belongs to the terpene synthase family. Tpsa subfamily. As to quaternary structure, monomer. Requires Mg(2+) as cofactor. It depends on Mn(2+) as a cofactor. Expressed exclusively in flowers. Expressed in intrafloral nectaries and in the funiculus within the ovules.

The protein localises to the cytoplasm. The catalysed reaction is (2E,6E)-farnesyl diphosphate = (+)-alpha-barbatene + diphosphate. It catalyses the reaction (2E,6E)-farnesyl diphosphate = (+)-thujopsene + diphosphate. It carries out the reaction (2E,6E)-farnesyl diphosphate = (+)-beta-chamigrene + diphosphate. The enzyme catalyses (2E,6E)-farnesyl diphosphate = (+)-beta-barbatene + diphosphate. The catalysed reaction is (2E,6E)-farnesyl diphosphate = beta-sesquiphellandrene + diphosphate. It catalyses the reaction (2E,6E)-farnesyl diphosphate = (S)-beta-bisabolene + diphosphate. It carries out the reaction (2E,6E)-farnesyl diphosphate = (-)-alpha-cuprenene + diphosphate. The enzyme catalyses (2E,6E)-farnesyl diphosphate = alpha-zingiberene + diphosphate. The catalysed reaction is (2E,6E)-farnesyl diphosphate = beta-acoradiene + diphosphate. It catalyses the reaction (2E,6E)-farnesyl diphosphate = (E)-beta-farnesene + diphosphate. It participates in secondary metabolite biosynthesis; terpenoid biosynthesis. In terms of biological role, involved in the biosynthesis of over 15 sesquiterpenes (C15). The major products are (+)-alpha-barbatene (27.3%), (+)-thujopsene (17.8%) and (+)-beta-chamigrene (9.9%). Can use farnesyl diphosphate or geranyl diphosphate as substrates, but not geranylgeranyl diphosphate. The polypeptide is Alpha-barbatene synthase (Arabidopsis thaliana (Mouse-ear cress)).